Consider the following 472-residue polypeptide: Ribulose bisphosphate carboxylase/oxygenase activase, chloroplastic (472 aa).

The N-terminal 58 residues, 1 to 58, are a transit peptide targeting the chloroplast; sequence MATAVSTVGAATRAPLNLNGSSAGASVPTSGFLGSSLKKHTNVRFPSSSRTTSMTVKA. 163-170 contacts ATP; it reads GGKGQGKS. Residues 448–472 form a disordered region; sequence GCTDPEAKNYDPTARSDDGSCTYNL. Over residues 452 to 465 the composition is skewed to basic and acidic residues; the sequence is PEAKNYDPTARSDD.

It belongs to the RuBisCO activase family.

The protein localises to the plastid. Its subcellular location is the chloroplast stroma. In terms of biological role, activation of RuBisCO (ribulose-1,5-bisphosphate carboxylase/oxygenase; EC 4.1.1.39) involves the ATP-dependent carboxylation of the epsilon-amino group of lysine leading to a carbamate structure. The protein is Ribulose bisphosphate carboxylase/oxygenase activase, chloroplastic of Spinacia oleracea (Spinach).